Here is a 220-residue protein sequence, read N- to C-terminus: Large ribosomal subunit protein uL3 (220 aa).

The tract at residues 137–159 is disordered; the sequence is GASHGAHKNHRKPGSIGGASTPS.

This sequence belongs to the universal ribosomal protein uL3 family. In terms of assembly, part of the 50S ribosomal subunit. Forms a cluster with proteins L14 and L19.

In terms of biological role, one of the primary rRNA binding proteins, it binds directly near the 3'-end of the 23S rRNA, where it nucleates assembly of the 50S subunit. This is Large ribosomal subunit protein uL3 from Renibacterium salmoninarum (strain ATCC 33209 / DSM 20767 / JCM 11484 / NBRC 15589 / NCIMB 2235).